A 547-amino-acid chain; its full sequence is Chaperonin GroEL (547 aa).

ATP-binding positions include 30–33 (TLGP), K51, 87–91 (DGTTT), G415, and D496. A disordered region spans residues 528–547 (KEEPMPMRGSGMGGMGGMDF). Residues 537–547 (SGMGGMGGMDF) show a composition bias toward gly residues.

Belongs to the chaperonin (HSP60) family. As to quaternary structure, forms a cylinder of 14 subunits composed of two heptameric rings stacked back-to-back. Interacts with the co-chaperonin GroES.

The protein resides in the cytoplasm. It carries out the reaction ATP + H2O + a folded polypeptide = ADP + phosphate + an unfolded polypeptide.. In terms of biological role, together with its co-chaperonin GroES, plays an essential role in assisting protein folding. The GroEL-GroES system forms a nano-cage that allows encapsulation of the non-native substrate proteins and provides a physical environment optimized to promote and accelerate protein folding. This chain is Chaperonin GroEL, found in Rickettsia canadensis (strain McKiel).